The following is a 74-amino-acid chain: U-scoloptoxin(09)-Sm3a (74 aa).

The signal sequence occupies residues 1-22 (MNANSIFLCFFIMLIGCTLTHS).

The protein belongs to the scoloptoxin-09 family. Post-translationally, contains 3 disulfide bonds. In terms of tissue distribution, expressed by the venom gland.

It is found in the secreted. This is U-scoloptoxin(09)-Sm3a from Scolopendra morsitans (Tanzanian blue ringleg centipede).